Consider the following 165-residue polypeptide: Choriogonadotropin subunit beta (165 aa).

Positions 1–20 are cleaved as a signal peptide; sequence METLQGLLLWLLLSMGGAQA. Intrachain disulfides connect Cys-29-Cys-77, Cys-43-Cys-92, Cys-46-Cys-130, Cys-54-Cys-108, Cys-58-Cys-110, and Cys-113-Cys-120. Asn-33 and Asn-50 each carry an N-linked (GlcNAc...) asparagine glycan. The segment at 131-165 is disordered; it reads DDPNLQASSSSKDPPPSPPSPSRLLEPAGTPFLPQ. 3 O-linked (GalNAc...) serine glycosylation sites follow: Ser-141, Ser-147, and Ser-152.

Belongs to the glycoprotein hormones subunit beta family. In terms of assembly, heterodimer of a common alpha chain and a unique beta chain which confers biological specificity to thyrotropin, lutropin, follitropin and gonadotropin. In terms of tissue distribution, placenta.

It is found in the secreted. Its function is as follows. Stimulates the ovaries to synthesize the steroids that are essential for the maintenance of pregnancy. This chain is Choriogonadotropin subunit beta (CGB), found in Papio anubis (Olive baboon).